The chain runs to 136 residues: MTLTLRVITPDKTVWDDSVEEIVLPSTTGQVGVLTGHAPLLTALDTGVMRVRPGKDWQAIALMGGFAEVENNEVKVLVNGAEVGDSIDKETARTEFQQAEQNLARANQGDNRQELIQATQEFKKARARFQAAGGMT.

This sequence belongs to the ATPase epsilon chain family. F-type ATPases have 2 components, CF(1) - the catalytic core - and CF(0) - the membrane proton channel. CF(1) has five subunits: alpha(3), beta(3), gamma(1), delta(1), epsilon(1). CF(0) has three main subunits: a, b and c.

It is found in the cellular thylakoid membrane. Functionally, produces ATP from ADP in the presence of a proton gradient across the membrane. In Prochloron didemni, this protein is ATP synthase epsilon chain (atpC).